Here is a 696-residue protein sequence, read N- to C-terminus: MKFAEHLSAHITPEWRKQYIQYEAFKDMLYSAQDQAPSVEVTDEDTVKRYFAKFEEKFFQTCEKELAKINTFYSEKLAEAQRRFATLQNELQSSLDAQKESTGVTTLRQRRKPVFHLSHEERVQHRNIKDLKLAFSEFYLSLILLQNYQNLNFTGFRKILKKHDKILETSRGADWRVAHVEVAPFYTCKKINQLISETEAVVTNELEDGDRQKAMKRLRVPPLGAAQPAPAWTTFRVGLFCGIFIVLNITLVLAAVFKLETDRSIWPLIRIYRGGFLLIEFLFLLGINTYGWRQAGVNHVLIFELNPRSNLSHQHLFEIAGFLGILWCLSLLACFFAPISVIPTYVYPLALYGFMVFFLINPTKTFYYKSRFWLLKLLFRVFTAPFHKVGFADFWLADQLNSLSVILMDLEYMICFYSLELKWDESKGLLPNNSEESGICHKYTYGVRAIVQCIPAWLRFIQCLRRYRDTKRAFPHLVNAGKYSTTFFMVTFAALYSTHKERGHSDTMVFFYLWIVFYIISSCYTLIWDLKMDWGLFDKNAGENTFLREEIVYPQKAYYYCAIIEDVILRFAWTIQISITSTTLLPHSGDIIATVFAPLEVFRRFVWNFFRLENEHLNNCGEFRAVRDISVAPLNADDQTLLEQMMDQDDGVRNRQKNRSWKYNQSISLRRPRLASQSKARDTKVLIEDTDDEANT.

At 1 to 228 (MKFAEHLSAH…RVPPLGAAQP (228 aa)) the chain is on the cytoplasmic side. Residues 2–224 (KFAEHLSAHI…MKRLRVPPLG (223 aa)) enclose the SPX domain. The tract at residues 158-165 (KILKKHDK) is important for inositol polyphosphate binding. Residues 229–259 (APAWTTFRVGLFCGIFIVLNITLVLAAVFKL) form a helical membrane-spanning segment. At 260 to 264 (ETDRS) the chain is on the extracellular side. Residues 265 to 296 (IWPLIRIYRGGFLLIEFLFLLGINTYGWRQAG) form a helical membrane-spanning segment. Residues 297-309 (VNHVLIFELNPRS) lie on the Cytoplasmic side of the membrane. A helical membrane pass occupies residues 310-337 (NLSHQHLFEIAGFLGILWCLSLLACFFA). Topologically, residues 338–343 (PISVIP) are extracellular. A helical membrane pass occupies residues 344-365 (TYVYPLALYGFMVFFLINPTKT). Positions 366–383 (FYYKSRFWLLKLLFRVFT) form an intramembrane region, helical. At 384-388 (APFHK) the chain is on the cytoplasmic side. Residues 389–422 (VGFADFWLADQLNSLSVILMDLEYMICFYSLELK) traverse the membrane as a discontinuously helical segment. Residues D398 and N401 each contribute to the phosphate site. Topologically, residues 423–429 (WDESKGL) are extracellular. The chain crosses the membrane as a discontinuously helical span at residues 430–471 (LPNNSEESGICHKYTYGVRAIVQCIPAWLRFIQCLRRYRDTK). An EXS domain is found at 439–643 (ICHKYTYGVR…LNADDQTLLE (205 aa)). Residue R472 is a topological domain, cytoplasmic. Residues 473 to 503 (AFPHLVNAGKYSTTFFMVTFAALYSTHKERG) traverse the membrane as a helical segment. Phosphate contacts are provided by K482 and Y483. The Extracellular segment spans residues 504–506 (HSD). Residues 507 to 534 (TMVFFYLWIVFYIISSCYTLIWDLKMDW) traverse the membrane as a helical segment. The Cytoplasmic portion of the chain corresponds to 535–553 (GLFDKNAGENTFLREEIVY). The discontinuously helical transmembrane segment at 554-585 (PQKAYYYCAIIEDVILRFAWTIQISITSTTLL) threads the bilayer. R570 contributes to the phosphate binding site. The Extracellular portion of the chain corresponds to 586–587 (PH). Residues 588–626 (SGDIIATVFAPLEVFRRFVWNFFRLENEHLNNCGEFRAV) traverse the membrane as a helical segment. Phosphate-binding residues include R603 and R604. Residues 627-696 (RDISVAPLNA…IEDTDDEANT (70 aa)) lie on the Cytoplasmic side of the membrane. At S668 the chain carries Phosphoserine. Residues 673–696 (RLASQSKARDTKVLIEDTDDEANT) are disordered. T690 is modified (phosphothreonine).

Belongs to the SYG1 (TC 2.A.94) family. Homodimer. Widely expressed. Detected in spleen, lymph node, thymus, leukocytes, bone marrow, heart, kidney, pancreas and skeletal muscle.

It is found in the cell membrane. The enzyme catalyses phosphate(in) = phosphate(out). Allosterically activated by inositol hexakisphosphate (Ins6P). Its function is as follows. Inorganic ion transporter that mediates phosphate ion export across plasma membrane. Plays a major role in phosphate homeostasis, preventing intracellular phosphate accumulation and possible calcium phosphate precipitation, ultimately preserving calcium signaling. Binds inositol hexakisphosphate (Ins6P) and similar inositol polyphosphates, such as 5-diphospho-inositol pentakisphosphate (5-InsP7), which are important intracellular signaling molecules involved in regulation of phosphate flux. The sequence is that of Solute carrier family 53 member 1 from Homo sapiens (Human).